A 378-amino-acid polypeptide reads, in one-letter code: Endopolygalacturonase I (378 aa).

The first 20 residues, 1-20, serve as a signal peptide directing secretion; sequence MHLNTTLLVSLALGAASVLA. The propeptide occupies 21-39; the sequence is SPAPPAITAPPTAEEIAKR. A disulfide bridge connects residues Cys43 and Cys61. The O-linked (Man...) threonine glycan is linked to Thr44. O-linked (Man...) serine glycans are attached at residues Ser46, Ser48, Ser52, Ser53, Ser55, Ser57, and Ser62. Residue Thr63 is glycosylated (O-linked (Man...) threonine). O-linked (Man...) serine glycosylation is present at Ser73. PbH1 repeat units lie at residues 174-204, 205-226, 227-247, 256-277, and 285-307; these read SDYL…DIGT, STYV…AVNS, GENI…SIGS, VKNV…RIKT, and VSDV…VVQQ. The active-site Proton donor is Asp219. Cys221 and Cys237 are oxidised to a cystine. Residue His241 is part of the active site. The N-linked (GlcNAc...) asparagine glycan is linked to Asn258. 2 disulfide bridges follow: Cys345–Cys350 and Cys369–Cys378.

This sequence belongs to the glycosyl hydrolase 28 family.

The protein resides in the secreted. It carries out the reaction (1,4-alpha-D-galacturonosyl)n+m + H2O = (1,4-alpha-D-galacturonosyl)n + (1,4-alpha-D-galacturonosyl)m.. Involved in maceration and soft-rotting of plant tissue. Hydrolyzes the 1,4-alpha glycosidic bonds of de-esterified pectate in the smooth region of the plant cell wall. The protein is Endopolygalacturonase I (pgaI) of Aspergillus aculeatus.